The sequence spans 406 residues: Pyridinium-3,5-bisthiocarboxylic acid mononucleotide nickel insertion protein (406 aa).

This sequence belongs to the LarC family.

It catalyses the reaction Ni(II)-pyridinium-3,5-bisthiocarboxylate mononucleotide = pyridinium-3,5-bisthiocarboxylate mononucleotide + Ni(2+). In terms of biological role, involved in the biosynthesis of a nickel-pincer cofactor ((SCS)Ni(II) pincer complex). Binds Ni(2+), and functions in nickel delivery to pyridinium-3,5-bisthiocarboxylic acid mononucleotide (P2TMN), to form the mature cofactor. Is thus probably required for the activation of nickel-pincer cofactor-dependent enzymes. The chain is Pyridinium-3,5-bisthiocarboxylic acid mononucleotide nickel insertion protein from Akkermansia muciniphila (strain ATCC BAA-835 / DSM 22959 / JCM 33894 / BCRC 81048 / CCUG 64013 / CIP 107961 / Muc).